A 359-amino-acid polypeptide reads, in one-letter code: E3 ubiquitin-protein ligase RNF146 (359 aa).

The RING-type zinc finger occupies 38–76; it reads CAICLQTCVHPVSLPCKHVFCYLCVKGASWLGKRCALCR. Residues K86 and K96 each participate in a glycyl lysine isopeptide (Lys-Gly) (interchain with G-Cter in ubiquitin) cross-link. The 77-residue stretch at 93–169 folds into the WWE domain; sequence EELKAASRGN…EHGRRRKIKR (77 aa). Y109, R112, and W116 together coordinate a glycoprotein. K132 participates in a covalent cross-link: Glycyl lysine isopeptide (Lys-Gly) (interchain with G-Cter in ubiquitin). A glycoprotein contacts are provided by Y146, Q155, R165, and K177. A Glycyl lysine isopeptide (Lys-Gly) (interchain with G-Cter in ubiquitin) cross-link involves residue K177. Disordered stretches follow at residues 197–243 and 261–359; these read SSAD…DAGI and ERSH…VTEV. Residues 199 to 212 show a composition bias toward low complexity; sequence ADGADSGSAQTGAS. Residues 217–235 are compositionally biased toward polar residues; the sequence is VPSSTRPLTSVDGQLTSPV. A compositionally biased stretch (acidic residues) spans 284–298; the sequence is SVEETESDASSDSED. S290 and S294 each carry phosphoserine. A compositionally biased stretch (polar residues) spans 306 to 324; sequence HSLTQQRPLVPNGNQTVAD.

In terms of assembly, can form homooligomers. Interacts with PARsylated AXIN1, AXIN2, BLZF1, CASC3, H1-2, IPO7, LIG3, NCL, PARP1, XRCC1, XRCC5 and XRCC6. Interacts with DDB1, DHX15, IQGAP1, LRPPRC, PARP2, PRKDC, RUVBL2, TNKS1 and TNKS2. Binding often leads to interactor ubiquitination, in the presence of the appropriate E1 and E2 enzymes, and proteasomal degradation. In terms of processing, ubiquitinated; autoubiquitinated. Autoubiquitination is enhanced upon PAR-binding. In terms of tissue distribution, expressed at relatively high levels in the brain. Also present in spleen, heart, kidney, testis and liver. In the brain, expressed in the cerebellum, hippocampus, striatum, cortex, frontal cortex and, at lowest levels, in olfactory bulb (at protein level). Predominantly expressed in neurons.

Its subcellular location is the cytoplasm. The protein localises to the cytosol. It is found in the nucleus. It catalyses the reaction S-ubiquitinyl-[E2 ubiquitin-conjugating enzyme]-L-cysteine + [acceptor protein]-L-lysine = [E2 ubiquitin-conjugating enzyme]-L-cysteine + N(6)-ubiquitinyl-[acceptor protein]-L-lysine.. It participates in protein modification; protein ubiquitination. Functionally, E3 ubiquitin-protein ligase that specifically binds poly-ADP-ribosylated (PARsylated) proteins and mediates their ubiquitination and subsequent degradation. May regulate many important biological processes, such as cell survival and DNA damage response. Acts as an activator of the Wnt signaling pathway by mediating the ubiquitination of PARsylated AXIN1 and AXIN2, 2 key components of the beta-catenin destruction complex. Acts in cooperation with tankyrase proteins (TNKS and TNKS2), which mediate PARsylation of target proteins AXIN1, AXIN2, BLZF1, CASC3, TNKS and TNKS2. Recognizes and binds tankyrase-dependent PARsylated proteins via its WWE domain and mediates their ubiquitination, leading to their degradation. Different ubiquitin linkage types have been observed: TNKS2 undergoes ubiquitination at 'Lys-48' and 'Lys-63', while AXIN1 is only ubiquitinated at 'Lys-48'. May regulate TNKS and TNKS2 subcellular location, preventing aggregation at a centrosomal location. Neuroprotective protein. Protects the brain against N-methyl-D-aspartate (NMDA) receptor-mediated glutamate excitotoxicity and ischemia, by interfering with PAR-induced cell death, called parthanatos. Prevents nuclear translocation of AIFM1 in a PAR-binding dependent manner. Does not affect PARP1 activation. Protects against cell death induced by DNA damaging agents, such as N-methyl-N-nitro-N-nitrosoguanidine (MNNG) and rescues cells from G1 arrest. Promotes cell survival after gamma-irradiation. Facilitates DNA repair. The protein is E3 ubiquitin-protein ligase RNF146 (Rnf146) of Mus musculus (Mouse).